The primary structure comprises 298 residues: ATP phosphoribosyltransferase (298 aa).

Belongs to the ATP phosphoribosyltransferase family. Long subfamily. The cofactor is Mg(2+).

It localises to the cytoplasm. It carries out the reaction 1-(5-phospho-beta-D-ribosyl)-ATP + diphosphate = 5-phospho-alpha-D-ribose 1-diphosphate + ATP. It functions in the pathway amino-acid biosynthesis; L-histidine biosynthesis; L-histidine from 5-phospho-alpha-D-ribose 1-diphosphate: step 1/9. Its activity is regulated as follows. Feedback inhibited by histidine. Its function is as follows. Catalyzes the condensation of ATP and 5-phosphoribose 1-diphosphate to form N'-(5'-phosphoribosyl)-ATP (PR-ATP). Has a crucial role in the pathway because the rate of histidine biosynthesis seems to be controlled primarily by regulation of HisG enzymatic activity. The polypeptide is ATP phosphoribosyltransferase (Vibrio parahaemolyticus serotype O3:K6 (strain RIMD 2210633)).